Reading from the N-terminus, the 144-residue chain is Ribosomal RNA large subunit methyltransferase H (144 aa).

Residues L63, G92, and 111-116 (LSPMTF) each bind S-adenosyl-L-methionine.

Belongs to the RNA methyltransferase RlmH family. In terms of assembly, homodimer.

It is found in the cytoplasm. It catalyses the reaction pseudouridine(1915) in 23S rRNA + S-adenosyl-L-methionine = N(3)-methylpseudouridine(1915) in 23S rRNA + S-adenosyl-L-homocysteine + H(+). In terms of biological role, specifically methylates the pseudouridine at position 1915 (m3Psi1915) in 23S rRNA. In Parasynechococcus marenigrum (strain WH8102), this protein is Ribosomal RNA large subunit methyltransferase H.